A 69-amino-acid chain; its full sequence is Small ribosomal subunit protein bS21 (69 aa).

This sequence belongs to the bacterial ribosomal protein bS21 family.

This Treponema pallidum (strain Nichols) protein is Small ribosomal subunit protein bS21 (rpsU).